The primary structure comprises 119 residues: Protein YdaY (119 aa).

The sequence is that of Protein YdaY (ydaY) from Escherichia coli (strain K12).